We begin with the raw amino-acid sequence, 357 residues long: MAEFKFTDLVEPVAVDKKTALRITVLGGGSFGTAMANLAARNGCDTMIWIRDAETAEEINKTHINKRYLPDFTLESSLRAVSDLEQAVCDRDIILVAIPSHSFRDVLKQIAPYITAQAVVSLTKGVEAKTFSFMSDIIREELPEVPYGVLSGPNLAKEIMAGMPSGTVIASDSELVRYAVQHALHSALFRVFGSDDVHGVELGGALKNIYAVAMGIGAAYKIGENTKSMILTRALAEMSRFAVKQGANPLTFLGLSGVGDLFATCNSPLSRNYQIGYALGSGKTLEQASKELGQTAEGINTIVQVRGKAQELDVYMPITNALYEVIFEGAPPLNIALSLMKNGHRSDVEFVLPHHEV.

NADPH-binding residues include serine 30, phenylalanine 31, arginine 51, and lysine 124. Sn-glycerol 3-phosphate-binding residues include lysine 124 and glycine 152. NADPH is bound at residue alanine 156. The sn-glycerol 3-phosphate site is built by lysine 207, aspartate 260, serine 270, arginine 271, and asparagine 272. Lysine 207 (proton acceptor) is an active-site residue. Arginine 271 contacts NADPH. An NADPH-binding site is contributed by glutamate 297.

This sequence belongs to the NAD-dependent glycerol-3-phosphate dehydrogenase family.

Its subcellular location is the cytoplasm. The catalysed reaction is sn-glycerol 3-phosphate + NAD(+) = dihydroxyacetone phosphate + NADH + H(+). It carries out the reaction sn-glycerol 3-phosphate + NADP(+) = dihydroxyacetone phosphate + NADPH + H(+). It participates in membrane lipid metabolism; glycerophospholipid metabolism. Catalyzes the reduction of the glycolytic intermediate dihydroxyacetone phosphate (DHAP) to sn-glycerol 3-phosphate (G3P), the key precursor for phospholipid synthesis. This is Glycerol-3-phosphate dehydrogenase [NAD(P)+] from Acinetobacter baumannii (strain AB307-0294).